The following is a 583-amino-acid chain: MISHVLVKDTSCLKVRTSYKCFVKYFPKCSVQSSFHSYDELAFSRRLYNLPRTLLNSRYYSNHSHGLVHGSKSPPSSQFLVPSFLQFNGQLKALCNNSAFQALPIKLSDLQKHWPSLKPHPLPPKRVSLGIPSISNPPVDTVISDSPTSPHPPSFVQPHPPYGIFAAPILDVRVLTNPGAVKRTYNLCLDISKYPLLEGKDWKIGGSFGIMPPNSDAEVLHLAHLLKIPQHELYVTKVLRTNGGRWPTIWGEDKPRCLYTSLYHIFKWCSDFISKPPTKSLIRLLAEHTLNPVEKSVLLALSDFRQDESYCRICTQSCVTLPDILEAFPSCHPPVDHLISALPQLMPRWYSISNDPSLANKRLEMAFTVQEYHSPNGQSRTGICTGFLEDLALAFLKARHDGSLANKKFTVPMFRGVQQNPFAKEFHNDGPMCLIGAGVGIAPFRGFVQRRLANAACTGKVWIIQGCRDQKLDELYHGEWNTVPGHHKNPKCRAKKLVVESRNGRREYVQDAVRRHGDVIWDVLSHKNGRIYLCGSGNSFVSEIEKALMDVAMKYGKLSKEEAQKELKNWQKPMNCKLIKEVW.

Residues 162 to 424 (YGIFAAPILD…RGVQQNPFAK (263 aa)) form the FAD-binding FR-type domain.

The protein belongs to the flavoprotein pyridine nucleotide cytochrome reductase family. It depends on FAD as a cofactor.

It localises to the mitochondrion. This is an uncharacterized protein from Schizosaccharomyces pombe (strain 972 / ATCC 24843) (Fission yeast).